Consider the following 91-residue polypeptide: Sec-independent protein translocase protein TatA (91 aa).

A helical transmembrane segment spans residues M1 to G21. A disordered region spans residues G42–V91.

The protein belongs to the TatA/E family. In terms of assembly, the Tat system comprises two distinct complexes: a TatABC complex, containing multiple copies of TatA, TatB and TatC subunits, and a separate TatA complex, containing only TatA subunits. Substrates initially bind to the TatABC complex, which probably triggers association of the separate TatA complex to form the active translocon.

It localises to the cell inner membrane. In terms of biological role, part of the twin-arginine translocation (Tat) system that transports large folded proteins containing a characteristic twin-arginine motif in their signal peptide across membranes. TatA could form the protein-conducting channel of the Tat system. The polypeptide is Sec-independent protein translocase protein TatA (Methylorubrum populi (strain ATCC BAA-705 / NCIMB 13946 / BJ001) (Methylobacterium populi)).